We begin with the raw amino-acid sequence, 2793 residues long: MKGEITLDGAIALLSSDKTKDRTDGLADLKHILQKNKRNSNLQSMSDKACHKIFESLFRLVSTEKTFYNRANSKGASSSKAAATRLSACASVVRTAVETFLRNLRIKSVRAILDHITNVLVSPDSSLFELLSVDYTKCLSTILHYPPHVEHLGVEEWESVLKFCLKVVNVRNDHNSQQSTWSPHSSVMDDYIGASGGRSTPSRMTPSLAVREKPKGPTGVVEEALSCIKILSGVPNAPLQDNAESILLGLASYVGSPSLSGSGHQTAFSAINAVAMGIIFDNSELVRVTLLDLVPVIRQHWTTKLMGLKDELLVTTMLIVTFLIDEIRRKPDEALIAVIDGLIHTLQREYFRRSEKDILQVDELVFDTNSIGQHEKFRLWPRLESPRSEHNWTVVWIMARLLELSEELTTRLSTHCPPEAETPSKRQRISSKIDDVFRDSTASFGIRRVCALQLIPFLLNHYACIDSKVSLLERLIPNINDDNATISSWTMIAIACIAASPQADKPPLKRYWQQAWDLTSRASTSQLTSRAACYLQNSILQYSLLDYAAVAETINSMLSFVRLNGPSTVSDASLELWASVIRMTAQINPGSVSNASVQICELVDIYDIWDAETTVSIQKSSQSDPNDLGILDLLQAKSESFLHTWQSLSEDKSRHVTPDIVQILTSFCITVALYTSCLPEQPGPRLQTLLSNSRPTAIHRALYGLLTPLSEVLESQRQSHKQRLYALNDDTMDLDDPFGPSTDQVEEASNILCTNRSDLPLFQDSASFHRYMTILISIYNRMYSQQSEPQQHVTRALEDYLNDLDEVDLLAAHDLLPYVYQSCARTDRQTQLVLLENLGEKCLQTYELERCENSHLLCIQMMCSLAMSWTRGTQDSLSDSAADIYTWFTTIFLKKGRASSSVLIAFAKLLGVILSLNPAYSSDQSSPSPKTTLFKIISDGEVLVKFNAGSLVPQLFGQFLLEDHDNVFNDVLECLPRDPTWEEGIAVRLFLLAQLASKWHTLLRRSIYHIFETPAQVHHSLWYAEKCLRSVSDALGLQDAKEIFRLFSSQILYTWTETQSIKSMPFSIFGYANLNDMICDAQDEIVGQIMMRASESDAAELSEILGRPFVGLLTDSFYKAEAYTIAHDISTPPREGSQPKGVENRLKKILGAEVFVTLIEAQFPQIVATFFGSLDFFQQVEKAFSKRESFQEALVTLKRITEKGAARTVLPPNQQPSFRARYLLDELEFLCKRSGYELETIWTPTLASYVCRTLLESIHPALGSLHACSVLRKIKILICVAGPVMLSDYPFEMIIHGLQPFLVDISCSEDAVAIFWYLLEAGKTYLCEQPGLMAGIAVSTSLSLGRFLASPPVNSRQESQLQAVVGNLRTFCRWFDGYLRSYTSPALDDESSRSFRRFTCSLQTIVEQESSGSGANETDLLLEVLKDRESKSGLLSKPISDRVISLLCSTSKAALGYHLTTIERDEDAILNAVTVCQTLRDFNPGTEYRSWAARVIGRAFAATGKISDALLREQDLTLFRSSSTQSGTDILCRSKANILEVLGSKLLNSRQTGPIERTLQLIISNLANFPDFEPCVSAISPSVMKALTWSPYQCPGISLNALEAKELENVHGWDLSLSPSYWARNVGLFLSKAAAEDPVIGSLSNILYLIPDLAVQLLPYILHDALLAEIRGKVAEVRDSISQIFNETLRAGAENSIPHARLIIKCVLYLRNQPKPGEETIVDRDDWLDINYAVASSAASRCRLPKTALMFLETHVSRCTASSRRSSVAKYDLPAGLLHDIFKNIDDPDFFYGVQQTSSLDSVIETLEHESSGFKNLLFQSAQYDSEIQMTGSGNAYGVLKALNSTNLQGIANSMIGALGNSSDTAVPLGSMLKAATNLRQWEIPISPLNTSPPATIFRAFQALNTPGPLVDMRASIGESYRSNLNLINSDRRSATSLRTAMRTLGILTEIEEVLGSGSAAEIDQKWEEISARTSWLKNTDVQEVGEILSSHETLFSSIKQKDYLRSAFNLSDIDAQLLEVKVIRQSLHIARNHGIAQASLRSAVYLSKLANHSVSLGLNIEGVAKFDLANVLWDQGEMAPSIQILQQLKDRNDLHKQAIPISRAELLVTLSQGHHIAEARLEKPEAIIQNYLTPAVKELKGRSEGEDAGRVYHGFAIFCDQQLQNPDGLEDFARIEQLRNRKEKEVVALDAMLKTAEGKERDNLKFHRTKTKQWFDLDDREYQRLKRSREAFLQQCLENYLICLRESEAYNNDVLRFCALWLAQSHSDIANSAVSKYIAGVPSRKFAPLMNQLTSRLLDVSDDFQALLSELIYRICSDHPFHGMYQIFASSKSKGGRDQSALSRNRAAAKLADIMRNDRHIGPLWVAVHNTNINYVRFAVERLDDKAKSGAKIRLNKLAPGIRLEQDAVNQRLPPPTMKIDIRVDCDYSDVPKLAKYLPDFTVASGVSAPKIVTAIASNGVRYKQLFKGGNDDLRQDAIMEQVFEQVSSLLKDHQATRQRNLGIRAYKVLPLTSNAGIIEFVPNTIPLNDFLMPAHQRYYPRDMKPSACRKHIADVQTRSFEQRVRTYRQVIEKFHPVMRYFFMEKFNNPDDWFGRRLSYTQSTAAISILGHVLGLGDRHGHNILLDERTGEVVHIDLGVAFEQGRVLPVPEVVPFRLTRDLVDGMGITKTEGVFRRCCEFTLEALRQESYSIMTILDVLRYDPLYSWTVSPLRMKKMQEQDTSDGPPVLPGSTTDQQRPTNEPSEADRALTVVAKKLSKTLSVTATVNELIQQATDEKNLAVLYCGWAAYA.

The FAT domain occupies 1734–2334 (VASSAASRCR…MYQIFASSKS (601 aa)). The PI3K/PI4K catalytic domain maps to 2438 to 2750 (YLPDFTVASG…PTNEPSEADR (313 aa)). A G-loop region spans residues 2444–2450 (VASGVSA). The tract at residues 2616-2624 (GLGDRHGHN) is catalytic loop. The tract at residues 2636-2660 (HIDLGVAFEQGRVLPVPEVVPFRLT) is activation loop. The interval 2718-2748 (KMQEQDTSDGPPVLPGSTTDQQRPTNEPSEA) is disordered. The segment covering 2733–2745 (GSTTDQQRPTNEP) has biased composition (polar residues). In terms of domain architecture, FATC spans 2761 to 2793 (KTLSVTATVNELIQQATDEKNLAVLYCGWAAYA).

This sequence belongs to the PI3/PI4-kinase family. ATM subfamily. Associates with DNA double-strand breaks.

Its subcellular location is the nucleus. The protein resides in the chromosome. It localises to the telomere. It catalyses the reaction L-seryl-[protein] + ATP = O-phospho-L-seryl-[protein] + ADP + H(+). The catalysed reaction is L-threonyl-[protein] + ATP = O-phospho-L-threonyl-[protein] + ADP + H(+). In terms of biological role, serine/threonine protein kinase which activates checkpoint signaling upon genotoxic stresses such as ionizing radiation (IR), ultraviolet light (UV), or DNA replication stalling, thereby acting as a DNA damage sensor. Recognizes the substrate consensus sequence [ST]-Q. Phosphorylates histone H2A to form H2AS128ph (gamma-H2A) at sites of DNA damage, involved in the regulation of DNA damage response mechanism. Required for the control of telomere length and genome stability. The chain is Serine/threonine-protein kinase tel1 (tel1) from Emericella nidulans (strain FGSC A4 / ATCC 38163 / CBS 112.46 / NRRL 194 / M139) (Aspergillus nidulans).